Here is a 41-residue protein sequence, read N- to C-terminus: Conotoxin Ac4.2 (41 aa).

A propeptide spanning residues 1–11 (FDGRNAAVNER) is cleaved from the precursor. Proline 13 is modified (4-hydroxyproline). O-linked (HexNAc...) threonine glycans are attached at residues threonine 18 and threonine 20. A 4-hydroxyproline mark is found at proline 29 and proline 33. Cysteine 40 carries the cysteine amide modification.

The protein belongs to the conotoxin A superfamily. Post-translationally, contains 3 disulfide bonds. In terms of tissue distribution, expressed by the venom duct.

It localises to the secreted. In terms of biological role, probable neurotoxin with ion channel inhibitor activity. The polypeptide is Conotoxin Ac4.2 (Conus achatinus (Little frog cone)).